We begin with the raw amino-acid sequence, 219 residues long: Thiopurine S-methyltransferase (219 aa).

Trp10, Leu45, Glu66, and Arg130 together coordinate S-adenosyl-L-methionine.

The protein belongs to the class I-like SAM-binding methyltransferase superfamily. TPMT family.

It is found in the cytoplasm. It carries out the reaction S-adenosyl-L-methionine + a thiopurine = S-adenosyl-L-homocysteine + a thiopurine S-methylether.. This chain is Thiopurine S-methyltransferase, found in Psychrobacter cryohalolentis (strain ATCC BAA-1226 / DSM 17306 / VKM B-2378 / K5).